Consider the following 325-residue polypeptide: MANFIEKITYLGTPAIKAGNEHLEMIVVPEWGSNVISLVDKTTNVQLLREPETAESFHDTPTLYGIPILFPPNRISDGTFSFRGRTYHFDINEKDKHNHLHGFLYHEKWNVVTTKQTDEGVIVETEIDLSELPHVQKQFPHHAVVRMTYTIKENTLFKHATVMNKGKEAFPWGIGYHTTFIFPAESSLFSLTADQQWELDERLLPTGKLMDVPYKEALHEGMDLRHKQLDDVFLSSYQKRGGENQAVIYHQHAHISIIYKADEQFKHWVVYNADGKQGYLCPEPYTWVTNAVNLDLPSSLTGLQVLEPGEETTAKSSITIELNHQ.

Substrate is bound at residue 73–74 (NR). His177 serves as the catalytic Proton donor. Asp230 lines the substrate pocket. The active-site Proton acceptor is Glu283.

Belongs to the aldose epimerase family.

It catalyses the reaction alpha-D-glucose = beta-D-glucose. Its pathway is carbohydrate metabolism; hexose metabolism. This chain is Aldose 1-epimerase (galM), found in Bacillus subtilis (strain 168).